The sequence spans 321 residues: Phospho-N-acetylmuramoyl-pentapeptide-transferase (321 aa).

The next 10 membrane-spanning stretches (helical) occupy residues 1–21 (MIFVYALLALVITFVLVPVLI), 50–70 (MGGLTFLLSIVITSLVAIIFV), 76–96 (IILLLFVTIGFGLIGFIDDYI), 112–132 (FLAQIGIAIIFFVLSNVFHLV), 140–160 (IPFTNVAIPLSFAYVIFIVFL), 176–196 (GLATGLSIIGFTMYAIMSFVL), 200–220 (AIGIFCIIMLFALLGFLPYNI), 225–245 (VFMGDTGSLALGGIFATISIM), 250–270 (LSLIFIGLVFVIETLSVMLQV), and 300–320 (VVTVFWAVGLISGLIGLWIGV).

Belongs to the glycosyltransferase 4 family. MraY subfamily. Mg(2+) serves as cofactor.

The protein resides in the cell membrane. The enzyme catalyses UDP-N-acetyl-alpha-D-muramoyl-L-alanyl-gamma-D-glutamyl-L-lysyl-D-alanyl-D-alanine + di-trans,octa-cis-undecaprenyl phosphate = Mur2Ac(oyl-L-Ala-gamma-D-Glu-L-Lys-D-Ala-D-Ala)-di-trans,octa-cis-undecaprenyl diphosphate + UMP. It participates in cell wall biogenesis; peptidoglycan biosynthesis. Its function is as follows. Catalyzes the initial step of the lipid cycle reactions in the biosynthesis of the cell wall peptidoglycan: transfers peptidoglycan precursor phospho-MurNAc-pentapeptide from UDP-MurNAc-pentapeptide onto the lipid carrier undecaprenyl phosphate, yielding undecaprenyl-pyrophosphoryl-MurNAc-pentapeptide, known as lipid I. This Staphylococcus aureus (strain bovine RF122 / ET3-1) protein is Phospho-N-acetylmuramoyl-pentapeptide-transferase.